We begin with the raw amino-acid sequence, 301 residues long: Glutamyl-Q tRNA(Asp) synthetase (301 aa).

Residues 9 to 13 (RFAPS) and E45 contribute to the L-glutamate site. The 'HIGH' region signature appears at 12-22 (PSPTGPLHLGS). 4 residues coordinate Zn(2+): C101, C103, Y121, and C125. L-glutamate is bound by residues Y179 and R197. Residues 235-239 (KLSKQ) carry the 'KMSKS' region motif. K238 provides a ligand contact to ATP.

The protein belongs to the class-I aminoacyl-tRNA synthetase family. GluQ subfamily. Zn(2+) is required as a cofactor.

Functionally, catalyzes the tRNA-independent activation of glutamate in presence of ATP and the subsequent transfer of glutamate onto a tRNA(Asp). Glutamate is transferred on the 2-amino-5-(4,5-dihydroxy-2-cyclopenten-1-yl) moiety of the queuosine in the wobble position of the QUC anticodon. In Thiobacillus denitrificans (strain ATCC 25259 / T1), this protein is Glutamyl-Q tRNA(Asp) synthetase.